The sequence spans 324 residues: Casein kinase I (324 aa).

The region spanning 9–278 (YALGKKLGSG…LRRLLKDLFI (270 aa)) is the Protein kinase domain. Residues 15-23 (LGSGSFGDI) and Lys-38 each bind ATP. Residue Asp-128 is the Proton acceptor of the active site.

Belongs to the protein kinase superfamily. CK1 Ser/Thr protein kinase family. Casein kinase I subfamily. Interacts with rhoptry protein RON3; the interaction is direct. Interacts with CK2alpha; the interaction is direct. Interacts with nucleosome assembly protein NAPL. Interacts with RAB5b. Interacts with host GAPVD1. Interacts with host SNX22. Requires Mg(2+) as cofactor.

The protein resides in the cytoplasm. It localises to the cytoplasmic vesicle. The protein localises to the secretory vesicle. It is found in the microneme. Its subcellular location is the secreted. The protein resides in the host cell surface. It carries out the reaction L-seryl-[protein] + ATP = O-phospho-L-seryl-[protein] + ADP + H(+). The catalysed reaction is L-threonyl-[protein] + ATP = O-phospho-L-threonyl-[protein] + ADP + H(+). In terms of biological role, serine/threonine-protein kinase likely to be involved in many cellular processes. Phosphorylates rhoptry protein RON3, nucleosome assembly protein NAPL and DNA/RNA-binding protein ALBA4 in vitro. The chain is Casein kinase I from Plasmodium falciparum (isolate Dd2).